Consider the following 337-residue polypeptide: Diacylglycerol O-acyltransferase 2-like protein 6 (337 aa).

Helical transmembrane passes span 22 to 42 (IPVY…FLLF) and 102 to 122 (YIIA…NFAT).

It belongs to the diacylglycerol acyltransferase family. As to expression, expressed in all tissues tested except pancreas.

The protein resides in the endoplasmic reticulum membrane. It catalyses the reaction 1,2-di-(9Z-octadecenoyl)-sn-glycerol + (9Z)-octadecenoyl-CoA = 1,2,3-tri-(9Z-octadecenoyl)-glycerol + CoA. The enzyme catalyses 1-O-(9Z-octadecenyl)-glycerol + (9Z)-octadecenoyl-CoA = 1-O-(9Z-octadecyl)-3-(9Z-octadecenoyl)-glycerol + CoA. It carries out the reaction 1-(9Z-octadecenoyl)-glycerol + (9Z)-octadecenoyl-CoA = 1,2-di-(9Z-octadecenoyl)-glycerol + CoA. Diglyceride acyltransferase that uses fatty acyl-CoA as substrate. Particularly active with oleate as a substrate. Has no wax synthase activity to produce wax esters. Able to use 1-monoalkylglycerol (1-MAkG) as an acyl acceptor for the synthesis of monoalkyl-monoacylglycerol (MAMAG). This Homo sapiens (Human) protein is Diacylglycerol O-acyltransferase 2-like protein 6.